Here is a 359-residue protein sequence, read N- to C-terminus: Fructose-bisphosphate aldolase class 2 (359 aa).

S62 provides a ligand contact to D-glyceraldehyde 3-phosphate. D110 (proton donor) is an active-site residue. H111, D145, E175, and H227 together coordinate Zn(2+). G228 contacts dihydroxyacetone phosphate. H265 is a binding site for Zn(2+). Dihydroxyacetone phosphate contacts are provided by residues 266–268 and 287–290; these read GGS and NIDT.

This sequence belongs to the class II fructose-bisphosphate aldolase family. The cofactor is Zn(2+).

It catalyses the reaction beta-D-fructose 1,6-bisphosphate = D-glyceraldehyde 3-phosphate + dihydroxyacetone phosphate. It functions in the pathway carbohydrate degradation; glycolysis; D-glyceraldehyde 3-phosphate and glycerone phosphate from D-glucose: step 4/4. Functionally, catalyzes the aldol condensation of dihydroxyacetone phosphate (DHAP or glycerone-phosphate) with glyceraldehyde 3-phosphate (G3P) to form fructose 1,6-bisphosphate (FBP) in gluconeogenesis and the reverse reaction in glycolysis. This chain is Fructose-bisphosphate aldolase class 2 (fbaA), found in Buchnera aphidicola subsp. Baizongia pistaciae (strain Bp).